The primary structure comprises 126 residues: Chorion class B protein M1768 (126 aa).

The left arm stretch occupies residues 1-17 (YGGLGYGGLGGGCGRGF). The tract at residues 18 to 86 (SGGGLPVATA…GNGAVGITRE (69 aa)) is central domain. The right arm (Gly-rich tandem repeats) stretch occupies residues 87–126 (GGFGYGAGYGDGYGLGFGGYGGGYGLGYGGYGGCGCSWGY).

The protein belongs to the chorion protein family.

This protein is one of many from the eggshell of the silk moth. In Bombyx mori (Silk moth), this protein is Chorion class B protein M1768.